A 240-amino-acid chain; its full sequence is Uridylate kinase (240 aa).

13–16 provides a ligand contact to ATP; the sequence is KFSG. Gly55 is a UMP binding site. ATP contacts are provided by Gly56 and Arg60. Residues Asp76 and 137-144 each bind UMP; that span reads TGNPFFTT. Thr164, Tyr170, and Asp173 together coordinate ATP.

Belongs to the UMP kinase family. Homohexamer.

The protein localises to the cytoplasm. It carries out the reaction UMP + ATP = UDP + ADP. It functions in the pathway pyrimidine metabolism; CTP biosynthesis via de novo pathway; UDP from UMP (UMPK route): step 1/1. Inhibited by UTP. Functionally, catalyzes the reversible phosphorylation of UMP to UDP. The sequence is that of Uridylate kinase from Helicobacter pylori (strain J99 / ATCC 700824) (Campylobacter pylori J99).